The primary structure comprises 544 residues: BTB/POZ domain-containing protein At2g13690 (544 aa).

Disordered stretches follow at residues 34–66 and 82–111; these read ASPDTRSISSRNHIPAKSQQQRPKLVPCSPQSS and LSPGRVSPIDSDPTVTTMQETETTQEEEDD. Polar residues predominate over residues 37–55; that stretch reads DTRSISSRNHIPAKSQQQR. Positions 93-103 are enriched in low complexity; that stretch reads DPTVTTMQETE. Positions 142 to 225 constitute a BTB domain; that stretch reads YDARLSLKGR…MFEESNVIIK (84 aa).

Its pathway is protein modification; protein ubiquitination. May act as a substrate-specific adapter of an E3 ubiquitin-protein ligase complex (CUL3-RBX1-BTB) which mediates the ubiquitination and subsequent proteasomal degradation of target proteins. This chain is BTB/POZ domain-containing protein At2g13690 (PRL1-IFG), found in Arabidopsis thaliana (Mouse-ear cress).